A 543-amino-acid chain; its full sequence is Sensor histidine kinase DcuS (543 aa).

Over Met1–Thr20 the chain is Cytoplasmic. A helical membrane pass occupies residues Val21 to Phe41. The Periplasmic portion of the chain corresponds to Ser42–Trp181. Residues Arg107–His110, Lys121, Gly140–Leu142, and Arg147 contribute to the (R)-malate site. A helical membrane pass occupies residues Ser182 to Val202. Residues Asn203 to Arg543 are Cytoplasmic-facing. One can recognise a PAS domain in the interval Leu212–Asp323. In terms of domain architecture, Histidine kinase spans Glu346–Gly538. His349 is subject to Phosphohistidine; by autocatalysis.

In terms of assembly, homodimer. Autophosphorylated. The phosphoryl group is rapidly transferred to DcuR.

Its subcellular location is the cell inner membrane. It catalyses the reaction ATP + protein L-histidine = ADP + protein N-phospho-L-histidine.. In terms of biological role, member of the two-component regulatory system DcuR/DcuS. Involved in the C4-dicarboxylate-stimulated regulation of the genes encoding the anaerobic fumarate respiratory system (frdABCD; nuoAN; dcuB; sdhCDAB; etc.). Weakly regulates the aerobic C4-dicarboxylate transporter dctA. Activates DcuR by phosphorylation. The sequence is that of Sensor histidine kinase DcuS (dcuS) from Escherichia coli O6:H1 (strain CFT073 / ATCC 700928 / UPEC).